The primary structure comprises 82 residues: Delta-conotoxin-like CnVIA (82 aa).

The signal sequence occupies residues 1–22 (MKLTCMMIVAVLFLTAWTFVTA). Residues 23 to 49 (DDSRNGLENLSPKARHEMKNPEASKSN) constitute a propeptide that is removed on maturation. 3 disulfide bridges follow: C54/C69, C61/C73, and C68/C78.

It belongs to the conotoxin O1 superfamily. As to expression, expressed by the venom duct.

It is found in the secreted. Its function is as follows. Delta-conotoxins bind to site 6 of voltage-gated sodium channels (Nav) and inhibit the inactivation process. This Conus consors (Singed cone) protein is Delta-conotoxin-like CnVIA.